The sequence spans 173 residues: Macro domain-containing protein in gbd 3'region (173 aa).

The Macro domain maps to Met-1–Ser-173.

Belongs to the MacroD-type family.

The chain is Macro domain-containing protein in gbd 3'region from Cupriavidus necator (Alcaligenes eutrophus).